A 782-amino-acid chain; its full sequence is Sulfate permease family protein 3 (782 aa).

The next 12 helical transmembrane spans lie at 30 to 52 (YACS…TWLP), 64 to 84 (LSGG…LASI), 86 to 106 (GVPP…YIFF), 113 to 133 (ALGG…KVML), 196 to 216 (IHVA…MGVF), 232 to 252 (GFVV…MLGI), 274 to 294 (LDNV…FLVF), 302 to 322 (WLNS…VVGI), 359 to 379 (HIGL…ITVA), 398 to 418 (ALGF…TSGF), 433 to 453 (LTCL…GPAL), and 497 to 517 (FFLT…GFAV). The STAS domain maps to 546-700 (KRDLERIQGN…NKVGDAVKAA (155 aa)). A compositionally biased stretch (acidic residues) spans 728–742 (IDEESSDSNDNDDAE). The tract at residues 728–782 (IDEESSDSNDNDDAEIQERITEESENSEEVMSETSVSIEDATSLTSSRNSINSEE) is disordered. Over residues 767 to 782 (DATSLTSSRNSINSEE) the composition is skewed to polar residues.

The protein belongs to the SLC26A/SulP transporter (TC 2.A.53) family.

It localises to the membrane. Its function is as follows. Possible sulfate transporter. The chain is Sulfate permease family protein 3 (sulp-3) from Caenorhabditis elegans.